A 404-amino-acid chain; its full sequence is Deoxyguanosinetriphosphate triphosphohydrolase-like protein (404 aa).

The 149-residue stretch at 69-217 (RLTHSLEVAQ…AGIADDIAYD (149 aa)) folds into the HD domain.

It belongs to the dGTPase family. Type 2 subfamily.

The protein is Deoxyguanosinetriphosphate triphosphohydrolase-like protein of Rhodopseudomonas palustris (strain BisB18).